We begin with the raw amino-acid sequence, 482 residues long: Zinc finger protein 385B (482 aa).

The segment at Met-1–Leu-105 is required for induction of apoptosis. 2 consecutive Matrin-type zinc fingers follow at residues Ser-34–Gln-64 and Ile-169–Ala-199. Disordered regions lie at residues Asp-54–Gln-75, Lys-189–Leu-259, and Leu-268–Glu-287. An interaction with p53/TP53 region spans residues Pro-106 to Tyr-482. Positions Ser-231–Lys-240 are enriched in basic and acidic residues. The Matrin-type 3 zinc-finger motif lies at Lys-294 to Arg-328. 2 disordered regions span residues Ala-331–Gly-352 and His-378–Tyr-397. The Matrin-type 4 zinc-finger motif lies at Phe-360 to Gly-390.

As to quaternary structure, interacts with p53/TP53; the interaction is direct.

It localises to the nucleus. Functionally, may play a role in p53/TP53-mediated apoptosis. This chain is Zinc finger protein 385B (Znf385b), found in Mus musculus (Mouse).